We begin with the raw amino-acid sequence, 279 residues long: Thymidylate synthase (279 aa).

133-134 (RR) serves as a coordination point for dUMP. Residue C154 is the Nucleophile of the active site. DUMP-binding positions include 178–181 (RSND), N189, and 219–221 (HIY). D181 lines the (6R)-5,10-methylene-5,6,7,8-tetrahydrofolate pocket. A278 serves as a coordination point for (6R)-5,10-methylene-5,6,7,8-tetrahydrofolate.

It belongs to the thymidylate synthase family. Bacterial-type ThyA subfamily. Homodimer.

It is found in the cytoplasm. It carries out the reaction dUMP + (6R)-5,10-methylene-5,6,7,8-tetrahydrofolate = 7,8-dihydrofolate + dTMP. Its pathway is pyrimidine metabolism; dTTP biosynthesis. Its function is as follows. Catalyzes the reductive methylation of 2'-deoxyuridine-5'-monophosphate (dUMP) to 2'-deoxythymidine-5'-monophosphate (dTMP) while utilizing 5,10-methylenetetrahydrofolate (mTHF) as the methyl donor and reductant in the reaction, yielding dihydrofolate (DHF) as a by-product. This enzymatic reaction provides an intracellular de novo source of dTMP, an essential precursor for DNA biosynthesis. The protein is Thymidylate synthase of Streptococcus sanguinis (strain SK36).